The chain runs to 241 residues: Leucyl/phenylalanyl-tRNA--protein transferase (241 aa).

Belongs to the L/F-transferase family.

It localises to the cytoplasm. The catalysed reaction is N-terminal L-lysyl-[protein] + L-leucyl-tRNA(Leu) = N-terminal L-leucyl-L-lysyl-[protein] + tRNA(Leu) + H(+). It catalyses the reaction N-terminal L-arginyl-[protein] + L-leucyl-tRNA(Leu) = N-terminal L-leucyl-L-arginyl-[protein] + tRNA(Leu) + H(+). It carries out the reaction L-phenylalanyl-tRNA(Phe) + an N-terminal L-alpha-aminoacyl-[protein] = an N-terminal L-phenylalanyl-L-alpha-aminoacyl-[protein] + tRNA(Phe). Functions in the N-end rule pathway of protein degradation where it conjugates Leu, Phe and, less efficiently, Met from aminoacyl-tRNAs to the N-termini of proteins containing an N-terminal arginine or lysine. This chain is Leucyl/phenylalanyl-tRNA--protein transferase, found in Neisseria meningitidis serogroup C / serotype 2a (strain ATCC 700532 / DSM 15464 / FAM18).